The chain runs to 146 residues: Small ribosomal subunit protein uS9 (146 aa).

S3 carries the phosphoserine modification. K60 carries the N6-acetyllysine modification.

Belongs to the universal ribosomal protein uS9 family. As to quaternary structure, component of the small ribosomal subunit. Part of the small subunit (SSU) processome, composed of more than 70 proteins and the RNA chaperone small nucleolar RNA (snoRNA) U3.

Its subcellular location is the cytoplasm. It localises to the nucleus. The protein localises to the nucleolus. In terms of biological role, component of the small ribosomal subunit. The ribosome is a large ribonucleoprotein complex responsible for the synthesis of proteins in the cell. Part of the small subunit (SSU) processome, first precursor of the small eukaryotic ribosomal subunit. During the assembly of the SSU processome in the nucleolus, many ribosome biogenesis factors, an RNA chaperone and ribosomal proteins associate with the nascent pre-rRNA and work in concert to generate RNA folding, modifications, rearrangements and cleavage as well as targeted degradation of pre-ribosomal RNA by the RNA exosome. The protein is Small ribosomal subunit protein uS9 (RPS16) of Bos taurus (Bovine).